The sequence spans 396 residues: Chorismate synthase (396 aa).

2 residues coordinate NADP(+): Arg40 and Arg46. FMN is bound by residues 134-136, 257-258, Gly302, 317-321, and Arg343; these read RSS, QA, and KPIPS.

This sequence belongs to the chorismate synthase family. Homotetramer. It depends on FMNH2 as a cofactor.

It catalyses the reaction 5-O-(1-carboxyvinyl)-3-phosphoshikimate = chorismate + phosphate. It functions in the pathway metabolic intermediate biosynthesis; chorismate biosynthesis; chorismate from D-erythrose 4-phosphate and phosphoenolpyruvate: step 7/7. Its function is as follows. Catalyzes the anti-1,4-elimination of the C-3 phosphate and the C-6 proR hydrogen from 5-enolpyruvylshikimate-3-phosphate (EPSP) to yield chorismate, which is the branch point compound that serves as the starting substrate for the three terminal pathways of aromatic amino acid biosynthesis. This reaction introduces a second double bond into the aromatic ring system. The polypeptide is Chorismate synthase (Bifidobacterium animalis subsp. lactis (strain AD011)).